Here is a 373-residue protein sequence, read N- to C-terminus: Anhydro-N-acetylmuramic acid kinase (373 aa).

Residue 12–19 participates in ATP binding; the sequence is GTSLDGVD.

Belongs to the anhydro-N-acetylmuramic acid kinase family.

It catalyses the reaction 1,6-anhydro-N-acetyl-beta-muramate + ATP + H2O = N-acetyl-D-muramate 6-phosphate + ADP + H(+). It participates in amino-sugar metabolism; 1,6-anhydro-N-acetylmuramate degradation. It functions in the pathway cell wall biogenesis; peptidoglycan recycling. Functionally, catalyzes the specific phosphorylation of 1,6-anhydro-N-acetylmuramic acid (anhMurNAc) with the simultaneous cleavage of the 1,6-anhydro ring, generating MurNAc-6-P. Is required for the utilization of anhMurNAc either imported from the medium or derived from its own cell wall murein, and thus plays a role in cell wall recycling. The chain is Anhydro-N-acetylmuramic acid kinase from Salmonella agona (strain SL483).